Reading from the N-terminus, the 219-residue chain is UPF0173 metal-dependent hydrolase Mlab_1154 (219 aa).

It belongs to the UPF0173 family.

The chain is UPF0173 metal-dependent hydrolase Mlab_1154 from Methanocorpusculum labreanum (strain ATCC 43576 / DSM 4855 / Z).